The following is a 214-amino-acid chain: Histidine biosynthesis bifunctional protein HisIE (214 aa).

The segment at 1-114 (MDLSAVRFDE…LEGEKDLGFV (114 aa)) is phosphoribosyl-AMP cyclohydrolase. A phosphoribosyl-ATP pyrophosphohydrolase region spans residues 115–214 (VGQVYATIKE…RSPYDGSHGN (100 aa)).

It in the N-terminal section; belongs to the PRA-CH family. This sequence in the C-terminal section; belongs to the PRA-PH family.

It is found in the cytoplasm. It catalyses the reaction 1-(5-phospho-beta-D-ribosyl)-ATP + H2O = 1-(5-phospho-beta-D-ribosyl)-5'-AMP + diphosphate + H(+). The enzyme catalyses 1-(5-phospho-beta-D-ribosyl)-5'-AMP + H2O = 1-(5-phospho-beta-D-ribosyl)-5-[(5-phospho-beta-D-ribosylamino)methylideneamino]imidazole-4-carboxamide. Its pathway is amino-acid biosynthesis; L-histidine biosynthesis; L-histidine from 5-phospho-alpha-D-ribose 1-diphosphate: step 2/9. It functions in the pathway amino-acid biosynthesis; L-histidine biosynthesis; L-histidine from 5-phospho-alpha-D-ribose 1-diphosphate: step 3/9. This chain is Histidine biosynthesis bifunctional protein HisIE, found in Thermus thermophilus (strain ATCC BAA-163 / DSM 7039 / HB27).